The primary structure comprises 451 residues: Glucose-6-phosphate isomerase (451 aa).

Glu291 (proton donor) is an active-site residue. Active-site residues include His312 and Lys426.

It belongs to the GPI family.

The protein resides in the cytoplasm. It catalyses the reaction alpha-D-glucose 6-phosphate = beta-D-fructose 6-phosphate. The protein operates within carbohydrate biosynthesis; gluconeogenesis. It participates in carbohydrate degradation; glycolysis; D-glyceraldehyde 3-phosphate and glycerone phosphate from D-glucose: step 2/4. Functionally, catalyzes the reversible isomerization of glucose-6-phosphate to fructose-6-phosphate. In Thermoanaerobacter sp. (strain X514), this protein is Glucose-6-phosphate isomerase.